The sequence spans 51 residues: Mitochondrial import receptor subunit TOM5 homolog (51 aa).

Met1 is subject to N-acetylmethionine. Lys10 participates in a covalent cross-link: Glycyl lysine isopeptide (Lys-Gly) (interchain with G-Cter in SUMO2). The chain crosses the membrane as a helical span at residues 27–45; sequence SIRNFLIYVALLRVTPYIL.

Belongs to the Tom5 family. Forms part of the preprotein translocase complex of the outer mitochondrial membrane (TOM complex) which consists of at least 7 different proteins (TOMM5, TOMM6, TOMM7, TOMM20, TOMM22, TOMM40 and TOMM70).

The protein localises to the mitochondrion outer membrane. The polypeptide is Mitochondrial import receptor subunit TOM5 homolog (Mus musculus (Mouse)).